The chain runs to 297 residues: Probable transcription factor vicR (297 aa).

2 disordered regions span residues 45–80 (LPGL…HSET) and 100–134 (TNQA…KNVH). Positions 58-67 (QKEEMRRKNA) are enriched in basic and acidic residues. A compositionally biased stretch (polar residues) spans 69-80 (AQMQNDSNHSET). Positions 110 to 124 (RSREDITNSRAERHS) are enriched in basic and acidic residues.

Its subcellular location is the nucleus. Probable transcription factor; part of the gene cluster that mediates the biosynthesis of the secondary metabolite victorin, the molecular basis for Victoria blight of oats. May play a role in the regulation of the production of victorin. This chain is Probable transcription factor vicR, found in Bipolaris victoriae (strain FI3) (Victoria blight of oats agent).